The primary structure comprises 272 residues: MADS-box transcription factor 58 (272 aa).

The segment at 1–41 (MHIYKEQEAEPSTGLMMPEPAPVASPGSGGSGGSGSVGAEK) is disordered. The span at 27–36 (GSGGSGGSGS) shows a compositional bias: gly residues. The MADS-box domain occupies 43–103 (GSRGKIEIKR…GRLYEYSNNS (61 aa)). The K-box domain occupies 129–219 (AQHYQQEAAK…KSKVAESERG (91 aa)).

Expressed in the lodicule, stamen carpel and ovule primordia.

It localises to the nucleus. Its function is as follows. Probable transcription factor involved in the development of floral organs. Acts as a C-class protein in association with MADS3. Involved in the control of lodicule number (whorl 2), stamen specification (whorl 3), floral meristem determinacy and regulation of the carpel morphogenesis (whorl 4). Plays a more predominant role in floral meristem determinacy than MADS3. The polypeptide is MADS-box transcription factor 58 (MADS58) (Oryza sativa subsp. japonica (Rice)).